A 95-amino-acid chain; its full sequence is Co-chaperonin GroES (95 aa).

This sequence belongs to the GroES chaperonin family. Heptamer of 7 subunits arranged in a ring. Interacts with the chaperonin GroEL.

The protein localises to the cytoplasm. Its function is as follows. Together with the chaperonin GroEL, plays an essential role in assisting protein folding. The GroEL-GroES system forms a nano-cage that allows encapsulation of the non-native substrate proteins and provides a physical environment optimized to promote and accelerate protein folding. GroES binds to the apical surface of the GroEL ring, thereby capping the opening of the GroEL channel. The sequence is that of Co-chaperonin GroES from Methylocella silvestris (strain DSM 15510 / CIP 108128 / LMG 27833 / NCIMB 13906 / BL2).